The primary structure comprises 624 residues: tRNA uridine 5-carboxymethylaminomethyl modification enzyme MnmG (624 aa).

Residues 13–18 (GGGHAG), Val125, and Ser180 each bind FAD. 273-287 (GPRYCPSIEDKIVRF) contributes to the NAD(+) binding site. Residue Gln370 participates in FAD binding.

It belongs to the MnmG family. Homodimer. Heterotetramer of two MnmE and two MnmG subunits. FAD serves as cofactor.

The protein resides in the cytoplasm. NAD-binding protein involved in the addition of a carboxymethylaminomethyl (cmnm) group at the wobble position (U34) of certain tRNAs, forming tRNA-cmnm(5)s(2)U34. This Legionella pneumophila (strain Paris) protein is tRNA uridine 5-carboxymethylaminomethyl modification enzyme MnmG.